Reading from the N-terminus, the 89-residue chain is MATSAAVKDEPATQFAKDQLKAIIERIERLEEEKKTISDDIRDVYAEAKGNGYDVKALRTIVRMRKQDADERAEQETILETYLQALGML.

The protein belongs to the UPF0335 family.

The sequence is that of UPF0335 protein RPE_4107 from Rhodopseudomonas palustris (strain BisA53).